Reading from the N-terminus, the 410-residue chain is Extracellular serine proteinase (410 aa).

The signal sequence occupies residues 1–19 (MKRGGLWLLLGLLVLSACS). The propeptide occupies 20-132 (SNPPAASTQE…IEADQEVRAF (113 aa)). Residues 45–130 (YIVVYKENAD…AYIEADQEVR (86 aa)) form the Inhibitor I9 domain. The Peptidase S8 domain occupies 139–410 (TWGLDRIDQR…SPNLLLYTPF (272 aa)). Residues Asp-171, His-204, and Ser-356 each act as charge relay system in the active site.

Belongs to the peptidase S8 family. In terms of processing, contains 4 Cys residues that form two disulfide bonds. Post-translationally, glycosylated. This proteinase has a 0.7% carbohydrate content.

The protein resides in the secreted. Functionally, serine proteinase with preferred activity for amino acids with aromatic side groups at the P1' side of the scissible bond. In Thermus sp. (strain Rt41A), this protein is Extracellular serine proteinase.